Consider the following 206-residue polypeptide: Flavin reductase (NADPH) (206 aa).

Residues G10, T12, G13, T15, R35, S38, and R39 each contribute to the NADP(+) site. A Phosphoserine modification is found at S42. Positions 54, 55, 75, and 76 each coordinate NADP(+). S82 carries the post-translational modification Phosphoserine. Residues M87, C109, H132, H153, and I154 each contribute to the NADP(+) site. The active-site S-nitroso-cysteine intermediate; for S-nitroso-CoA-dependent nitrosyltransferase activity is the C109. The S-nitroso-cysteine intermediate; for S-nitroso-CoA-dependent nitrosyltransferase activity role is filled by C188.

Belongs to the BLVRB family. In terms of assembly, monomer.

It localises to the cytoplasm. It carries out the reaction reduced riboflavin + NADP(+) = riboflavin + NADPH + 2 H(+). The catalysed reaction is bilirubin IXbeta + NADP(+) = biliverdin IXbeta + NADPH + H(+). It catalyses the reaction FMNH2 + NAD(+) = FMN + NADH + 2 H(+). The enzyme catalyses FMNH2 + NADP(+) = FMN + NADPH + 2 H(+). It carries out the reaction S-nitroso-CoA + L-cysteinyl-[protein] = S-nitroso-L-cysteinyl-[protein] + CoA. The catalysed reaction is L-cysteinyl-[SCAN] + S-nitroso-CoA = S-nitroso-L-cysteinyl-[SCAN] + CoA. It catalyses the reaction S-nitroso-L-cysteinyl-[SCAN] + L-cysteinyl-[protein] = L-cysteinyl-[SCAN] + S-nitroso-L-cysteinyl-[protein]. Functionally, enzyme that can both act as a NAD(P)H-dependent reductase and a S-nitroso-CoA-dependent nitrosyltransferase. Promotes fetal heme degradation during development. Also expressed in adult tissues, where it acts as a regulator of hematopoiesis, intermediary metabolism (glutaminolysis, glycolysis, TCA cycle and pentose phosphate pathway) and insulin signaling. Has a broad specificity oxidoreductase activity by catalyzing the NAD(P)H-dependent reduction of a variety of flavins, such as riboflavin, FAD or FMN, biliverdins, methemoglobin and PQQ (pyrroloquinoline quinone). Contributes to fetal heme catabolism by catalyzing reduction of biliverdin IXbeta into bilirubin IXbeta in the liver. Biliverdin IXbeta, which constitutes the major heme catabolite in the fetus is not present in adult. Does not reduce bilirubin IXalpha. Can also reduce the complexed Fe(3+) iron to Fe(2+) in the presence of FMN and NADPH. Acts as a protein nitrosyltransferase by catalyzing nitrosylation of cysteine residues of target proteins, such as HMOX2, INSR and IRS1. S-nitroso-CoA-dependent nitrosyltransferase activity is mediated via a 'ping-pong' mechanism: BLVRB first associates with both S-nitroso-CoA and protein substrate, nitric oxide group is then transferred from S-nitroso-CoA to Cys-109 and Cys-188 residues of BLVRB and from S-nitroso-BLVRB to the protein substrate. Inhibits insulin signaling by mediating nitrosylation of INSR and IRS1, leading to their inhibition. The polypeptide is Flavin reductase (NADPH) (Blvrb) (Mus musculus (Mouse)).